A 188-amino-acid polypeptide reads, in one-letter code: Translocon-associated protein subunit beta (188 aa).

Residues Met-1–Cys-15 form the signal peptide. At Val-16–Tyr-151 the chain is on the lumenal side. N-linked (GlcNAc...) asparagine glycosylation is found at Asn-93 and Asn-109. Residues Thr-152 to Phe-172 form a helical membrane-spanning segment. At Gln-173–Thr-188 the chain is on the cytoplasmic side.

Belongs to the TRAP-beta family. As to quaternary structure, heterotetramer of TRAP-alpha, TRAP-beta, TRAP-delta and TRAP-gamma.

It is found in the endoplasmic reticulum membrane. In terms of biological role, TRAP proteins are part of a complex whose function is to bind calcium to the ER membrane and thereby regulate the retention of ER resident proteins. The protein is Translocon-associated protein subunit beta of Caenorhabditis elegans.